The primary structure comprises 162 residues: Terminase, small subunit (162 aa).

The tract at residues 7-27 (NRFWEARSSHGRNPKFESPEA) is helix-turn-helix (HTH). The tract at residues 132–162 (QVEDVTPDKGDRDKRRSRIKELFNRGTGRDS) is disordered. A compositionally biased stretch (basic and acidic residues) spans 137 to 162 (TPDKGDRDKRRSRIKELFNRGTGRDS). The tract at residues 140–162 (KGDRDKRRSRIKELFNRGTGRDS) is interaction with the terminase large subunit gp2. Residues 143–152 (RDKRRSRIKE) mediate DNA binding.

This sequence belongs to the P22likvirus small terminase family. As to quaternary structure, homononamer; forms a ring-like structure through which genomic DNA is translocated into the capsid. Interacts with the terminase small subunit; the active complex is composed of dimer of terminase large subunits and a nonamer ring of terminase small subunits.

Functionally, the terminase small subunit binds to the packaging initiation site and regulates the ATPase activity of the terminase large subunit. The terminase lies at a unique vertex of the procapsid and is composed of two subunits, a small terminase subunit involved in viral DNA recognition (packaging 'pac' sequence), and a large terminase subunit possessing endonucleolytic and ATPase activities. Both terminase subunits heterooligomerize and are docked on the portal protein to form the packaging machine. The terminase large subunit exhibits endonuclease activity and cleaves the viral genome concatemer once the capsid is full (headful packaging). Once the capsid is packaged with the DNA, the terminase complex is substituted by neck proteins. The protein is Terminase, small subunit (3) of Salmonella typhimurium (Bacteriophage P22).